The sequence spans 512 residues: Maturase K (512 aa).

The protein belongs to the intron maturase 2 family. MatK subfamily.

The protein resides in the plastid. It localises to the chloroplast. Its function is as follows. Usually encoded in the trnK tRNA gene intron. Probably assists in splicing its own and other chloroplast group II introns. The polypeptide is Maturase K (Ginkgo biloba (Ginkgo)).